Reading from the N-terminus, the 66-residue chain is Large ribosomal subunit protein bL33c (66 aa).

As to quaternary structure, component of the chloroplast large ribosomal subunit (LSU). Mature 70S chloroplast ribosomes of higher plants consist of a small (30S) and a large (50S) subunit. The 30S small subunit contains 1 molecule of ribosomal RNA (16S rRNA) and 24 different proteins. The 50S large subunit contains 3 rRNA molecules (23S, 5S and 4.5S rRNA) and 33 different proteins.

The protein resides in the plastid. It localises to the chloroplast. Its function is as follows. Component of the chloroplast ribosome (chloro-ribosome), a dedicated translation machinery responsible for the synthesis of chloroplast genome-encoded proteins, including proteins of the transcription and translation machinery and components of the photosynthetic apparatus. The protein is Large ribosomal subunit protein bL33c (rpl33) of Spinacia oleracea (Spinach).